The following is a 96-amino-acid chain: Neutrophil defensin 3 (96 aa).

Residues M1–A19 form the signal peptide. The propeptide occupies E20–M66. Intrachain disulfides connect C68–C96, C70–C85, and C75–C95.

Its subcellular location is the secreted. Functionally, has bacteriostatic activity against Gram-positive bacteria S.aureus and L.monocytogenes and Gram-negative bacterium E.coli and antifungal activity against C.neoformans. The polypeptide is Neutrophil defensin 3 (Macaca mulatta (Rhesus macaque)).